The primary structure comprises 843 residues: General transcription and DNA repair factor IIH helicase/translocase subunit XPB/SSL2 (843 aa).

The tract at residues 1 to 85 (MTDVEGYQPK…TAADSSMNQM (85 aa)) is disordered. The segment covering 26 to 41 (SDEDSPATDAEIDENY) has biased composition (acidic residues). Basic and acidic residues predominate over residues 42–56 (DDNRETSEGRGERDT). The span at 64 to 74 (KKPRKKTKSSR) shows a compositional bias: basic residues. The Nuclear localization signal signature appears at 64–75 (KKPRKKTKSSRH). Residues 373–535 (MFGNGRARSG…DLNFLIGPKL (163 aa)) enclose the Helicase ATP-binding domain. 386-393 (LPCGAGKT) serves as a coordination point for ATP. The DEAH box signature appears at 488 to 491 (DEVH). Residues 589–743 (QACQFLIQYH…KVITHLHGME (155 aa)) form the Helicase C-terminal domain. Phosphoserine is present on Ser752.

This sequence belongs to the helicase family. RAD25/XPB subfamily. In terms of assembly, component of the 7-subunit TFIIH core complex composed of XPB/SSL2, XPD/RAD3, SSL1, TFB1, TFB2, TFB4 and TFB5, which is active in NER. The core complex associates with the 3-subunit CTD-kinase module TFIIK composed of CCL1, KIN28 and TFB3 to form the 10-subunit holoenzyme (holo-TFIIH) active in transcription. An additionnal subunit, TFB6, plays a role in the dissociation of the SSL2 helicase from TFIIH after transcription initiation. Interacts directly with TFB6. Requires Mg(2+) as cofactor.

The protein localises to the nucleus. The catalysed reaction is Couples ATP hydrolysis with the unwinding of duplex DNA by translocating in the 3'-5' direction.. It catalyses the reaction ATP + H2O = ADP + phosphate + H(+). In terms of biological role, ATP-dependent DNA translocase. Component of the general transcription and DNA repair factor IIH (TFIIH) core complex. When complexed to CDK-activating kinase (CAK), involved in RNA transcription by RNA polymerase II. May have 3'-5' helicase activity alone, the TFIIH core however has no 3'-5' helicase activity. Also involved in transcription-coupled nucleotide excision repair (NER) of damaged DNA. In NER, TFIIH acts by opening DNA around the lesion to allow the excision of the damaged oligonucleotide and its replacement by a new DNA fragment. The ATPase activity of XPB/SSL2, but not its helicase activity, is required for DNA opening. In transcription, TFIIH has an essential role in transcription initiation. When the pre-initiation complex (PIC) has been established, TFIIH is required for promoter opening and promoter escape. The ATP-dependent helicase activity of XPB/SSL2 is required for promoter opening and promoter escape. XPB/SSL2 acts as a double-stranded DNA translocase, promoting DNA opening by tracking in a 5'-3' dirction along the nontemplate promoter strand, rotating and inserting DNA into the Pol II active site cleft, leading to DNA unwinding. A dsDNA-stimulated ATPase, dATP and ATP are equally good substrates. May also use this translocase mechanism during DNA repair rather than physically wedging open damaged DNA. In Saccharomyces cerevisiae (strain ATCC 204508 / S288c) (Baker's yeast), this protein is General transcription and DNA repair factor IIH helicase/translocase subunit XPB/SSL2.